A 525-amino-acid chain; its full sequence is uncharacterized protein (525 aa).

Composition is skewed to polar residues over residues 139-149 (LNSTPDKTQAG) and 336-349 (SGKTDNAQETHTTS). Disordered regions lie at residues 139 to 158 (LNSTPDKTQAGKTAKQHQAP) and 330 to 356 (PAPAKNSGKTDNAQETHTTSPPGPYAT).

This is an uncharacterized protein from Treponema pallidum (strain Nichols).